A 131-amino-acid polypeptide reads, in one-letter code: Histone H2B.1 (131 aa).

The span at 1-19 shows a compositional bias: basic and acidic residues; the sequence is MSAKAEKKPASKAPAEKKP. Residues 1–38 form a disordered region; sequence MSAKAEKKPASKAPAEKKPAAKKTSTSTDGKKRSKARK. Residues lysine 7 and lysine 8 each carry the N6-acetyllysine; alternate modification. Residues lysine 7 and lysine 8 each participate in a glycyl lysine isopeptide (Lys-Gly) (interchain with G-Cter in SUMO); alternate cross-link. Serine 11 carries the phosphoserine modification. Lysine 12 carries the post-translational modification N6-acetyllysine. 4 positions are modified to N6-acetyllysine; alternate: lysine 17, lysine 18, lysine 22, and lysine 23. Residues lysine 17 and lysine 18 each participate in a glycyl lysine isopeptide (Lys-Gly) (interchain with G-Cter in SUMO); alternate cross-link. Lysine 22 bears the N6-butyryllysine; alternate mark. Lysine 23 bears the N6-methyllysine; alternate mark. Lysine 35 is subject to N6-succinyllysine. Lysine 38 is modified (N6,N6-dimethyllysine). Position 47 is an N6-succinyllysine (lysine 47). Residue lysine 124 forms a Glycyl lysine isopeptide (Lys-Gly) (interchain with G-Cter in ubiquitin) linkage.

The protein belongs to the histone H2B family. The nucleosome is a histone octamer containing two molecules each of H2A, H2B, H3 and H4 assembled in one H3-H4 heterotetramer and two H2A-H2B heterodimers. The octamer wraps approximately 147 bp of DNA. In terms of processing, monoubiquitinated by the RAD6/UBC2-BRE1 complex to form H2BK123ub1. H2BK123ub1 gives a specific tag for epigenetic transcriptional activation and is also prerequisite for H3K4me and H3K79me formation. H2BK123ub1 also modulates the formation of double-strand breaks during meiosis and is a prerequisite for DNA-damage checkpoint activation. Deubiquitination is performed by UBP8 in presence of SGF11. Phosphorylated by STE20 to form H2BS10ph during progression through meiotic prophase. May be correlated with chromosome condensation. H2BS10ph is also formed after H(2)O(2) treatment, and is a step leading to apoptosis. Post-translationally, acetylated by GCN5, a component of the SAGA complex, to form H2BK11ac and H2BK16ac. H2BK16ac can also be formed by ESA1, a component of the NuA4 histone acetyltransferase (HAT) complex. Acetylation of N-terminal lysines and particularly formation of H2BK11acK16ac has a positive effect on transcription. In terms of processing, sumoylation to form H2BK6su or H2BK7su, and probably also H2BK16su or H2BK17su, occurs preferentially near the telomeres and represses gene transcription.

It is found in the nucleus. It localises to the chromosome. Its function is as follows. Core component of nucleosome. Nucleosomes wrap and compact DNA into chromatin, limiting DNA accessibility to the cellular machineries which require DNA as a template. Histones thereby play a central role in transcription regulation, DNA repair, DNA replication and chromosomal stability. DNA accessibility is regulated via a complex set of post-translational modifications of histones, also called histone code, and nucleosome remodeling. This chain is Histone H2B.1 (HTB1), found in Saccharomyces cerevisiae (strain ATCC 204508 / S288c) (Baker's yeast).